The primary structure comprises 290 residues: 4-hydroxy-tetrahydrodipicolinate synthase (290 aa).

T45 is a binding site for pyruvate. The active-site Proton donor/acceptor is Y133. The active-site Schiff-base intermediate with substrate is K161. Residue I203 participates in pyruvate binding.

The protein belongs to the DapA family. Homotetramer; dimer of dimers.

It is found in the cytoplasm. It catalyses the reaction L-aspartate 4-semialdehyde + pyruvate = (2S,4S)-4-hydroxy-2,3,4,5-tetrahydrodipicolinate + H2O + H(+). Its pathway is amino-acid biosynthesis; L-lysine biosynthesis via DAP pathway; (S)-tetrahydrodipicolinate from L-aspartate: step 3/4. Functionally, catalyzes the condensation of (S)-aspartate-beta-semialdehyde [(S)-ASA] and pyruvate to 4-hydroxy-tetrahydrodipicolinate (HTPA). In Cellvibrio japonicus (strain Ueda107) (Pseudomonas fluorescens subsp. cellulosa), this protein is 4-hydroxy-tetrahydrodipicolinate synthase.